A 109-amino-acid polypeptide reads, in one-letter code: Nucleoid-associated protein Plut_1285 (109 aa).

Belongs to the YbaB/EbfC family. Homodimer.

Its subcellular location is the cytoplasm. The protein localises to the nucleoid. Functionally, binds to DNA and alters its conformation. May be involved in regulation of gene expression, nucleoid organization and DNA protection. The chain is Nucleoid-associated protein Plut_1285 from Chlorobium luteolum (strain DSM 273 / BCRC 81028 / 2530) (Pelodictyon luteolum).